The chain runs to 369 residues: MKYKRIVFKVGTSSITHSDGSLSRGKIQTITCQLAALHHAGHELVLVSSGAVAAGFGALGFKKRPVKIADKQASAAVGQGLLMEEYTANLSSDGIVSAQILLSRADFADKRRYQNAGGALSVLLQRRAVPIINENDTVSVEELKIGDNDTLSAQVAAMIQADLLVLLTDIDGLYTGNPNSNPDAVRLDKIEHINHEIIEMAGGSGSANGTGGMLTKIKAATIAAESGVPVYICSSLKPDALAEAAEHQADGSFFVPRAKGLRTQKQWLAFYSESRGSVYVDEGAEHALSEQGKSLLMSGIAGIEGHFSRMDTVTVYSKATKQPLGKGRVLFGSAAAEDLLKSRKAKGVFIHRDDWISITPEIRLLLTEF.

K9 is an ATP binding site. Substrate contacts are provided by S49, D136, and N148. Residues 168–169 (TD) and 210–216 (TGGMLTK) each bind ATP. The 81-residue stretch at 275–355 (RGSVYVDEGA…KGVFIHRDDW (81 aa)) folds into the PUA domain.

This sequence belongs to the glutamate 5-kinase family.

The protein localises to the cytoplasm. It catalyses the reaction L-glutamate + ATP = L-glutamyl 5-phosphate + ADP. It functions in the pathway amino-acid biosynthesis; L-proline biosynthesis; L-glutamate 5-semialdehyde from L-glutamate: step 1/2. Catalyzes the transfer of a phosphate group to glutamate to form L-glutamate 5-phosphate. The polypeptide is Glutamate 5-kinase (Neisseria meningitidis serogroup B (strain ATCC BAA-335 / MC58)).